A 622-amino-acid chain; its full sequence is Auxin response factor 11 (622 aa).

The segment at residues 145–247 (FVKILTASDT…DLRVGVRRLA (103 aa)) is a DNA-binding region (TF-B3). Disordered stretches follow at residues 358–398 (SIQR…ISEI) and 483–513 (SNISDSTTKCQDPNSSNSPKEQKQQTSTRSR). 2 stretches are compositionally biased toward polar residues: residues 376–387 (SALTPTPTQQQS) and 483–511 (SNISDSTTKCQDPNSSNSPKEQKQQTSTR). Residues 511-594 (RSRIKVQMQG…KKLFIYPSDE (84 aa)) form the PB1 domain.

This sequence belongs to the ARF family. As to quaternary structure, homodimers and heterodimers.

It is found in the nucleus. Its function is as follows. Auxin response factors (ARFs) are transcriptional factors that bind specifically to the DNA sequence 5'-TGTCTC-3' found in the auxin-responsive promoter elements (AuxREs). Could act as transcriptional activator or repressor. Formation of heterodimers with Aux/IAA proteins may alter their ability to modulate early auxin response genes expression. The protein is Auxin response factor 11 (ARF11) of Arabidopsis thaliana (Mouse-ear cress).